The following is a 236-amino-acid chain: Ribosome maturation protein SDO1 homolog (236 aa).

It belongs to the SDO1/SBDS family.

The protein is Ribosome maturation protein SDO1 homolog of Pyrococcus horikoshii (strain ATCC 700860 / DSM 12428 / JCM 9974 / NBRC 100139 / OT-3).